Here is a 546-residue protein sequence, read N- to C-terminus: MLLQLYRSVVVRLPQAIRVKSTPLRLCIQACSTNDSLEPQHPSLTFSDDNSRTRRWKVMGTLLGLGVVLVYHEHRCRASQESPRMYSKEDVRSHNNPKTGVWVTLGSEVFDVTKFVDLHPGGPSKLMLAAGGPLEPFWALYAVHNQPHVRELLAEYKIGELNPEDSMSPSVEASDPYADDPIRHPALRINSQRPFNAEPPPELLTEGYITPNPIFFTRNHLPVPNLDPHTYRLHVVGAPGGQSLSLSLDDLHKFPKHEVTVTLQCAGNRRSEMSKVKEVKGLEWRTGAISTARWAGARLCDVLAQAGHRLCDSEAHVCFEGLDSDPTGTAYGASIPLARAMDPEAEVLLAYEMNGQPLPRDHGFPVRVVVPGVVGARHVKWLGRVSVESEESYSHWQRRDYKGFSPSVDWDTVNFDLAPSIQELPIQSAITQPQDGAIVESGEVTIKGYAWSGGGRAVIRVDVSVDGGLTWQEAELEGEEQCPRKAWAWRIWQLKAQVPAEQKELNIICKAVDDSYNVQPDTVAPIWNLRGVLSNAWHRVHVQVVP.

A mitochondrion-targeting transit peptide spans 1-80 (MLLQLYRSVV…YHEHRCRASQ (80 aa)). Positions 83 to 162 (PRMYSKEDVR…LAEYKIGELN (80 aa)) constitute a Cytochrome b5 heme-binding domain. Position 119 (histidine 119) interacts with heme b. A Phosphoserine modification is found at serine 124. The heme b site is built by histidine 144, glutamine 146, and histidine 148. The interval 166–175 (SMSPSVEASD) is hinge. The moco domain stretch occupies residues 176–402 (PYADDPIRHP…YSHWQRRDYK (227 aa)). Mo-molybdopterin-binding positions include 216–220 (FTRNH), cysteine 265, aspartate 323, histidine 362, arginine 367, and 378–380 (HVK). Residues 403–539 (GFSPSVDWDT…RGVLSNAWHR (137 aa)) form a homodimerization region.

Homodimer. Heme b is required as a cofactor. Requires Mo-molybdopterin as cofactor.

The protein localises to the mitochondrion intermembrane space. It carries out the reaction sulfite + O2 + H2O = sulfate + H2O2. It functions in the pathway energy metabolism; sulfur metabolism. Functionally, catalyzes the oxidation of sulfite to sulfate, the terminal reaction in the oxidative degradation of sulfur-containing amino acids. This Mus musculus (Mouse) protein is Sulfite oxidase, mitochondrial (Suox).